Reading from the N-terminus, the 174-residue chain is Large ribosomal subunit protein uL18 (174 aa).

It belongs to the universal ribosomal protein uL18 family. In terms of assembly, part of the 50S ribosomal subunit. Contacts the 5S and 23S rRNAs.

Its function is as follows. This is one of the proteins that bind and probably mediate the attachment of the 5S RNA into the large ribosomal subunit, where it forms part of the central protuberance. In Methanocorpusculum labreanum (strain ATCC 43576 / DSM 4855 / Z), this protein is Large ribosomal subunit protein uL18.